Here is a 364-residue protein sequence, read N- to C-terminus: Mannonate dehydratase (364 aa).

Belongs to the mannonate dehydratase family. Requires Fe(2+) as cofactor. The cofactor is Mn(2+).

The enzyme catalyses D-mannonate = 2-dehydro-3-deoxy-D-gluconate + H2O. The protein operates within carbohydrate metabolism; pentose and glucuronate interconversion. Catalyzes the dehydration of D-mannonate. The protein is Mannonate dehydratase of Streptococcus equi subsp. zooepidemicus (strain MGCS10565).